A 185-amino-acid chain; its full sequence is Ribosome-recycling factor (185 aa).

This sequence belongs to the RRF family.

It is found in the cytoplasm. In terms of biological role, responsible for the release of ribosomes from messenger RNA at the termination of protein biosynthesis. May increase the efficiency of translation by recycling ribosomes from one round of translation to another. This chain is Ribosome-recycling factor, found in Listeria monocytogenes serotype 4a (strain HCC23).